The following is a 1175-amino-acid chain: Chromosome partition protein Smc (1175 aa).

Residue proline 32–asparagine 39 participates in ATP binding. A coiled-coil region spans residues valine 170–lysine 504. Residues leucine 524 to leucine 625 enclose the SMC hinge domain. 2 coiled-coil regions span residues aspartate 684–lysine 918 and serine 944–serine 1022. The tract at residues arginine 807–aspartate 849 is disordered. Residues arginine 817 to arginine 828 are compositionally biased toward basic and acidic residues. The segment covering threonine 829–arginine 838 has biased composition (polar residues). The span at leucine 840 to aspartate 849 shows a compositional bias: basic and acidic residues.

It belongs to the SMC family. As to quaternary structure, homodimer.

The protein localises to the cytoplasm. Its function is as follows. Required for chromosome condensation and partitioning. The sequence is that of Chromosome partition protein Smc from Delftia acidovorans (strain DSM 14801 / SPH-1).